Consider the following 384-residue polypeptide: MNVFWFIPTHGDSRYLGTAEGARAADYDYFRQVAVAADTLGYDGVLLPTGRSCEDAWVVASSLIPATKRLKFLVAIRPGLSSPGLSARMASTFDRLSGGRLLINVVTGGDSAELEGDGLFADHDTRYALTDDFLHIWRKLLAESHENGSVDFDGEHLRAKGGKLLYPPIQHPHPPLWFGGSSPAAHAIAADHIETYLTWGEPPAAVAKKIADIRARAAERGREIRFGIRLHVIVRETEEEAWRDADRLISRLDDDTIARAQQAFAKMDSEGQRRMAALHGGKRGSRQELEIYPNLWAGVGLVRGGAGTALVGNPEQVAARMREYAALGIETFILSGYPHLEESYRFAELVFPLVKGGDARRAGPLSGPFGEVVGNGYLPKVSQS.

It belongs to the SsuD family.

It catalyses the reaction an alkanesulfonate + FMNH2 + O2 = an aldehyde + FMN + sulfite + H2O + 2 H(+). Its function is as follows. Catalyzes the desulfonation of aliphatic sulfonates. This Burkholderia thailandensis (strain ATCC 700388 / DSM 13276 / CCUG 48851 / CIP 106301 / E264) protein is Alkanesulfonate monooxygenase.